The chain runs to 351 residues: Histidinol-phosphate aminotransferase (351 aa).

Residues 1-26 (MRFRAELEPLSPYNPPRASQEAAAER) form a disordered region. N6-(pyridoxal phosphate)lysine is present on Lys223.

Belongs to the class-II pyridoxal-phosphate-dependent aminotransferase family. Histidinol-phosphate aminotransferase subfamily. As to quaternary structure, homodimer. Pyridoxal 5'-phosphate is required as a cofactor.

It catalyses the reaction L-histidinol phosphate + 2-oxoglutarate = 3-(imidazol-4-yl)-2-oxopropyl phosphate + L-glutamate. The protein operates within amino-acid biosynthesis; L-histidine biosynthesis; L-histidine from 5-phospho-alpha-D-ribose 1-diphosphate: step 7/9. The polypeptide is Histidinol-phosphate aminotransferase (Rubrobacter xylanophilus (strain DSM 9941 / JCM 11954 / NBRC 16129 / PRD-1)).